The primary structure comprises 490 residues: Bifunctional protein GlmU (490 aa).

Residues 1–241 (MSSPGDTAVL…SALVAGVNNR (241 aa)) are pyrophosphorylase. UDP-N-acetyl-alpha-D-glucosamine contacts are provided by residues 12–15 (LAAG), Lys26, Gln83, 88–89 (GT), 112–114 (SGD), Gly151, Glu166, Asn181, and Asn239. Asp114 serves as a coordination point for Mg(2+). Asn239 provides a ligand contact to Mg(2+). A linker region spans residues 242-262 (VQLAQLGAELNRRIVAAHQLA). Positions 263 to 490 (GVTVVDPATT…AGGRPAGEAE (228 aa)) are N-acetyltransferase. Arg344 and Lys362 together coordinate UDP-N-acetyl-alpha-D-glucosamine. His374 (proton acceptor) is an active-site residue. Residues Tyr377 and Asn388 each contribute to the UDP-N-acetyl-alpha-D-glucosamine site. Residues Ala391, 397 to 398 (NY), Ser416, and Ala434 each bind acetyl-CoA. Positions 462–490 (RRKRPGSAAARAAEAAEKAAGGRPAGEAE) are disordered. The segment covering 467-490 (GSAAARAAEAAEKAAGGRPAGEAE) has biased composition (low complexity).

The protein in the N-terminal section; belongs to the N-acetylglucosamine-1-phosphate uridyltransferase family. This sequence in the C-terminal section; belongs to the transferase hexapeptide repeat family. As to quaternary structure, homotrimer. Mg(2+) serves as cofactor.

It localises to the cytoplasm. It catalyses the reaction alpha-D-glucosamine 1-phosphate + acetyl-CoA = N-acetyl-alpha-D-glucosamine 1-phosphate + CoA + H(+). It carries out the reaction N-acetyl-alpha-D-glucosamine 1-phosphate + UTP + H(+) = UDP-N-acetyl-alpha-D-glucosamine + diphosphate. It participates in nucleotide-sugar biosynthesis; UDP-N-acetyl-alpha-D-glucosamine biosynthesis; N-acetyl-alpha-D-glucosamine 1-phosphate from alpha-D-glucosamine 6-phosphate (route II): step 2/2. Its pathway is nucleotide-sugar biosynthesis; UDP-N-acetyl-alpha-D-glucosamine biosynthesis; UDP-N-acetyl-alpha-D-glucosamine from N-acetyl-alpha-D-glucosamine 1-phosphate: step 1/1. It functions in the pathway bacterial outer membrane biogenesis; LPS lipid A biosynthesis. In terms of biological role, catalyzes the last two sequential reactions in the de novo biosynthetic pathway for UDP-N-acetylglucosamine (UDP-GlcNAc). The C-terminal domain catalyzes the transfer of acetyl group from acetyl coenzyme A to glucosamine-1-phosphate (GlcN-1-P) to produce N-acetylglucosamine-1-phosphate (GlcNAc-1-P), which is converted into UDP-GlcNAc by the transfer of uridine 5-monophosphate (from uridine 5-triphosphate), a reaction catalyzed by the N-terminal domain. In Mycolicibacterium paratuberculosis (strain ATCC BAA-968 / K-10) (Mycobacterium paratuberculosis), this protein is Bifunctional protein GlmU.